We begin with the raw amino-acid sequence, 190 residues long: Dirigent protein 15 (190 aa).

The N-terminal stretch at 1-19 (MKSTLIIFFTLCLSMAVMA) is a signal peptide. N-linked (GlcNAc...) asparagine glycosylation is found at N63 and N128.

It belongs to the plant dirigent protein family. Homodimer.

Its subcellular location is the secreted. It localises to the extracellular space. The protein localises to the apoplast. In terms of biological role, dirigent proteins impart stereoselectivity on the phenoxy radical-coupling reaction, yielding optically active lignans from two molecules of coniferyl alcohol in the biosynthesis of lignans, flavonolignans, and alkaloids and thus plays a central role in plant secondary metabolism. This is Dirigent protein 15 (DIR15) from Arabidopsis thaliana (Mouse-ear cress).